Here is a 276-residue protein sequence, read N- to C-terminus: Large ribosomal subunit protein uL2cy (276 aa).

Disordered regions lie at residues 1-25 and 225-276; these read MAIHLYKTSTPSTRNGTVDSQVKSN and MNPV…RRSK. Residues 7-25 show a composition bias toward polar residues; that stretch reads KTSTPSTRNGTVDSQVKSN.

It belongs to the universal ribosomal protein uL2 family. In terms of assembly, part of the 50S ribosomal subunit.

Its subcellular location is the plastid. It localises to the chloroplast. The chain is Large ribosomal subunit protein uL2cy (rpl2-B) from Coffea arabica (Arabian coffee).